Consider the following 749-residue polypeptide: Catalase-peroxidase 2 (749 aa).

A signal peptide spans 1 to 27 (MFKRTIPLFAAFTLAISPSIFPNYAHA). A cross-link (tryptophyl-tyrosyl-methioninium (Trp-Tyr) (with M-255)) is located at residues 107–229 (WHAAGTYRIY…LAATVMGLIY (123 aa)). H108 (proton acceptor) is an active-site residue. Positions 229-255 (YVNPEGPNGVPDPLAAAEKIRETFGRM) form a cross-link, tryptophyl-tyrosyl-methioninium (Tyr-Met) (with W-107). H270 contacts heme b.

Belongs to the peroxidase family. Peroxidase/catalase subfamily. Homodimer or homotetramer. The cofactor is heme b. Post-translationally, formation of the three residue Trp-Tyr-Met cross-link is important for the catalase, but not the peroxidase activity of the enzyme.

It carries out the reaction H2O2 + AH2 = A + 2 H2O. It catalyses the reaction 2 H2O2 = O2 + 2 H2O. In terms of biological role, bifunctional enzyme with both catalase and broad-spectrum peroxidase activity. The polypeptide is Catalase-peroxidase 2 (Legionella pneumophila (strain Lens)).